Consider the following 370-residue polypeptide: Probable neutral protease 2 homolog ARB_03949 (370 aa).

The signal sequence occupies residues M1–A19. Residues Y20–R188 constitute a propeptide that is removed on maturation. 2 disulfide bridges follow: C196/C267 and C274/C292. H316 serves as a coordination point for Zn(2+). The active site involves E317. The Zn(2+) site is built by H320 and D331.

Belongs to the peptidase M35 family. It depends on Zn(2+) as a cofactor.

Its subcellular location is the secreted. It carries out the reaction Preferential cleavage of bonds with hydrophobic residues in P1'. Also 3-Asn-|-Gln-4 and 8-Gly-|-Ser-9 bonds in insulin B chain.. In terms of biological role, probable secreted metalloprotease that shows high activities on basic nuclear substrates such as histone and protamine. May be involved in virulence. The polypeptide is Probable neutral protease 2 homolog ARB_03949 (Arthroderma benhamiae (strain ATCC MYA-4681 / CBS 112371) (Trichophyton mentagrophytes)).